We begin with the raw amino-acid sequence, 512 residues long: Glycerol kinase 1 (512 aa).

Residue Thr-18 participates in ADP binding. ATP-binding residues include Thr-18, Thr-19, and Ser-20. Thr-18 is a binding site for sn-glycerol 3-phosphate. Arg-22 provides a ligand contact to ADP. Sn-glycerol 3-phosphate contacts are provided by Arg-88, Glu-89, Tyr-140, and Asp-255. The glycerol site is built by Arg-88, Glu-89, Tyr-140, Asp-255, and Gln-256. 2 residues coordinate ADP: Thr-277 and Gly-321. 4 residues coordinate ATP: Thr-277, Gly-321, Gln-325, and Gly-422. Residues Gly-422 and Asn-426 each contribute to the ADP site.

It belongs to the FGGY kinase family.

It carries out the reaction glycerol + ATP = sn-glycerol 3-phosphate + ADP + H(+). The protein operates within polyol metabolism; glycerol degradation via glycerol kinase pathway; sn-glycerol 3-phosphate from glycerol: step 1/1. Inhibited by fructose 1,6-bisphosphate (FBP). Key enzyme in the regulation of glycerol uptake and metabolism. Catalyzes the phosphorylation of glycerol to yield sn-glycerol 3-phosphate. This chain is Glycerol kinase 1, found in Streptomyces avermitilis (strain ATCC 31267 / DSM 46492 / JCM 5070 / NBRC 14893 / NCIMB 12804 / NRRL 8165 / MA-4680).